The chain runs to 354 residues: MALISMRQMLDHAAEFGYGVPAFNVNNLEQMRAIMEAADKTDSPVIVQASAGARKYAGAPFLRHLILAAIEEFPHIPVCMHQDHGTSPDVCQRSIQLGFSSVMMDGSLREDGKTPADYDYNVRVTQQTVAFAHACGVSVEGELGCLGSLETGMAGEEDGVGAEGVLDHSQLLTDPEEAADFVAKTKVDALAIAIGTSHGAYKFTNPPTGDTLSIQRIKEIHARIPDTHLVMHGSSSVPQEWLKIINEYGGEIGETYGVPVEEIVEGIKYGVRKVNIDTDLRLASTGAIREFLAKNPSEFDPRKYFAKTVAAMRDICIARYEAFGTAGNASKIKPISLEGMFQRYASGELDPKIN.

Ser50 serves as a coordination point for D-glyceraldehyde 3-phosphate. Residue Asp83 is the Proton donor of the active site. The Zn(2+) site is built by His84, Asp105, Glu142, and His198. Residue Gly199 coordinates dihydroxyacetone phosphate. His232 contributes to the Zn(2+) binding site. Dihydroxyacetone phosphate-binding positions include 233-235 and 275-278; these read GSS and NIDT.

The protein belongs to the class II fructose-bisphosphate aldolase family. Zn(2+) serves as cofactor.

The catalysed reaction is beta-D-fructose 1,6-bisphosphate = D-glyceraldehyde 3-phosphate + dihydroxyacetone phosphate. The protein operates within carbohydrate degradation; glycolysis; D-glyceraldehyde 3-phosphate and glycerone phosphate from D-glucose: step 4/4. Its function is as follows. Catalyzes the aldol condensation of dihydroxyacetone phosphate (DHAP or glycerone-phosphate) with glyceraldehyde 3-phosphate (G3P) to form fructose 1,6-bisphosphate (FBP) in gluconeogenesis and the reverse reaction in glycolysis. The sequence is that of Fructose-bisphosphate aldolase (fba) from Stutzerimonas stutzeri (Pseudomonas stutzeri).